The sequence spans 373 residues: tRNA (guanine(26)-N(2))-dimethyltransferase (373 aa).

Positions 2–365 (KIISEGETKL…AELSDLVVLI (364 aa)) constitute a Trm1 methyltransferase domain. The S-adenosyl-L-methionine site is built by R35, R66, D86, D113, and A114.

It belongs to the class I-like SAM-binding methyltransferase superfamily. Trm1 family.

The enzyme catalyses guanosine(26) in tRNA + 2 S-adenosyl-L-methionine = N(2)-dimethylguanosine(26) in tRNA + 2 S-adenosyl-L-homocysteine + 2 H(+). Its function is as follows. Dimethylates a single guanine residue at position 26 of a number of tRNAs using S-adenosyl-L-methionine as donor of the methyl groups. This Methanococcus maripaludis (strain C6 / ATCC BAA-1332) protein is tRNA (guanine(26)-N(2))-dimethyltransferase.